A 243-amino-acid chain; its full sequence is Aldehyde decarbonylase (243 aa).

Fe cation-binding residues include Glu-45, Glu-73, His-76, Glu-128, and His-160.

This sequence belongs to the aldehyde decarbonylase family. Requires Binds 2 metal cations per subunit. The catalytic dinuclear metal-binding site could be either a di-iron or a manganese-iron cofactor. as cofactor.

It catalyses the reaction a long-chain fatty aldehyde + 2 NADPH + O2 + H(+) = a long-chain alkane + formate + 2 NADP(+) + H2O. Catalyzes the decarbonylation of fatty aldehydes to alkanes. Requires the presence of ferredoxin, ferredoxin reductase and NADPH for in vitro decarbonylase activity. Involved in the biosynthesis of alkanes, mainly heptadecane and pentadecane. This chain is Aldehyde decarbonylase, found in Prochlorococcus marinus (strain MIT 9313).